The primary structure comprises 600 residues: Alpha pinene synthase, chloroplastic (600 aa).

Residues 1–27 (MSSISMHAGPLNISAANNHHPSWDRRV) are disordered. The transit peptide at 1 to 31 (MSSISMHAGPLNISAANNHHPSWDRRVSKPR) directs the protein to the chloroplast. Mg(2+) is bound by residues Asp-354, Asp-358, Asp-498, and Glu-506. A DDXXD motif motif is present at residues 354 to 358 (DDVYD).

Belongs to the terpene synthase family. Tpsa subfamily. Mg(2+) is required as a cofactor. Mn(2+) serves as cofactor. In terms of tissue distribution, expressed at low levels in leaves.

It is found in the plastid. It localises to the chloroplast. The enzyme catalyses (2E)-geranyl diphosphate = alpha-pinene + diphosphate. Its pathway is secondary metabolite biosynthesis; terpenoid biosynthesis. In terms of biological role, monoterpene synthase involved in the biosynthesis of volatile compounds widely used in aromatherapy and folk medicine, and present in culinary herbs. Mediates the conversion of (2E)-geranyl diphosphate (GPP) into alpha-pinene and, as minor compounds, into alpha-phellandrene, limonene and alpha-terpinolene. This Lavandula viridis (Green lavender) protein is Alpha pinene synthase, chloroplastic.